Here is a 293-residue protein sequence, read N- to C-terminus: MAAITASMVAELRAKTDAPMMECKKALTEADGDLAKAEELLRVKLGNKASKAASRVTAEGVVASFVGGNAGALVELNCETDFVAKNDDFLAFSKTVAELVATQNPADVAALSALPLDGSTVDAVRLALIGKIGENVSIRRFVRFETANKIATYLHGARIGVIVEYTGAEEQVGKDVAMHIAAMKPVALSAADVPAELIDTERRVAEQKAAESGKPAEIVAKMVDGSVQKYLKEVSLLNQTFVKNDKQTIEQMLKAADAAVQKFALFVVGEGIEKRQDDFAAEVAAQVAAAKQQ.

Residues 80–83 (TDFV) are involved in Mg(2+) ion dislocation from EF-Tu.

It belongs to the EF-Ts family.

The protein localises to the cytoplasm. Functionally, associates with the EF-Tu.GDP complex and induces the exchange of GDP to GTP. It remains bound to the aminoacyl-tRNA.EF-Tu.GTP complex up to the GTP hydrolysis stage on the ribosome. The protein is Elongation factor Ts of Burkholderia vietnamiensis (strain G4 / LMG 22486) (Burkholderia cepacia (strain R1808)).